A 248-amino-acid chain; its full sequence is Peptidyl-prolyl cis-trans isomerase, chloroplastic (248 aa).

The PPIase cyclophilin-type domain maps to 85-243; that stretch reads FFDIEIGGES…KPCKIAKSGE (159 aa). The tract at residues 223–248 is disordered; that stretch reads QETSKLDNSPKKPCKIAKSGELPLDG.

This sequence belongs to the cyclophilin-type PPIase family. In terms of tissue distribution, highly expressed in leaf.

It localises to the plastid. The protein localises to the chloroplast stroma. The enzyme catalyses [protein]-peptidylproline (omega=180) = [protein]-peptidylproline (omega=0). Binds cyclosporin A (CsA). CsA mediates some of its effects via an inhibitory action on PPIase. Functionally, PPIases accelerate the folding of proteins. It catalyzes the cis-trans isomerization of proline imidic peptide bonds in oligopeptides. The sequence is that of Peptidyl-prolyl cis-trans isomerase, chloroplastic from Vicia faba (Broad bean).